Here is a 129-residue protein sequence, read N- to C-terminus: MKRHGILNSQISKVLADLGHTDTIVIADCGLPIPAGVARIDLALELGTPSFVDVVRIVADDMAVEQVTLATEIKAANPVALEAVMKLDVPQDYVSHEAFKELTKQAKVIIRTGEATPYANVILHAGVIF.

Histidine 20 acts as the Proton donor in catalysis. Substrate is bound by residues aspartate 28, histidine 96, and 118-120; that span reads YAN.

It belongs to the RbsD / FucU family. RbsD subfamily. Homodecamer.

It is found in the cytoplasm. The catalysed reaction is beta-D-ribopyranose = beta-D-ribofuranose. The protein operates within carbohydrate metabolism; D-ribose degradation; D-ribose 5-phosphate from beta-D-ribopyranose: step 1/2. Its function is as follows. Catalyzes the interconversion of beta-pyran and beta-furan forms of D-ribose. The polypeptide is D-ribose pyranase (Exiguobacterium sibiricum (strain DSM 17290 / CCUG 55495 / CIP 109462 / JCM 13490 / 255-15)).